A 1133-amino-acid polypeptide reads, in one-letter code: Early transcription factor large subunit homolog (1133 aa).

The Helicase ATP-binding domain maps to 52-352 (KGGRAFFPCD…PNGQPLQRQQ (301 aa)). 99–106 (WQTGTGKS) is an ATP binding site. The short motif at 281–284 (DEIH) is the DEAH box element. The 201-residue stretch at 524–724 (MMKDILSIIR…EGDKALRKHA (201 aa)) folds into the Helicase C-terminal domain.

This sequence belongs to the DEAD box helicase family. DEAH subfamily.

Its subcellular location is the virion. It catalyses the reaction ATP + H2O = ADP + phosphate + H(+). Putative initation factor. This African swine fever virus (isolate Tick/South Africa/Pretoriuskop Pr4/1996) (ASFV) protein is Early transcription factor large subunit homolog.